A 39-amino-acid polypeptide reads, in one-letter code: Cytochrome b559 subunit beta (39 aa).

Residues 14 to 30 traverse the membrane as a helical segment; that stretch reads WLAIHGLAVPTVFFLGS. H18 is a binding site for heme.

This sequence belongs to the PsbE/PsbF family. In terms of assembly, heterodimer of an alpha subunit and a beta subunit. PSII is composed of 1 copy each of membrane proteins PsbA, PsbB, PsbC, PsbD, PsbE, PsbF, PsbH, PsbI, PsbJ, PsbK, PsbL, PsbM, PsbT, PsbX, PsbY, PsbZ, Psb30/Ycf12, at least 3 peripheral proteins of the oxygen-evolving complex and a large number of cofactors. It forms dimeric complexes. Requires heme b as cofactor.

The protein localises to the plastid. Its subcellular location is the chloroplast thylakoid membrane. Functionally, this b-type cytochrome is tightly associated with the reaction center of photosystem II (PSII). PSII is a light-driven water:plastoquinone oxidoreductase that uses light energy to abstract electrons from H(2)O, generating O(2) and a proton gradient subsequently used for ATP formation. It consists of a core antenna complex that captures photons, and an electron transfer chain that converts photonic excitation into a charge separation. The chain is Cytochrome b559 subunit beta from Ephedra sinica (Chinese ephedra).